Reading from the N-terminus, the 89-residue chain is Small ribosomal subunit protein uS19 (89 aa).

Belongs to the universal ribosomal protein uS19 family.

In terms of biological role, protein S19 forms a complex with S13 that binds strongly to the 16S ribosomal RNA. In Bacteroides thetaiotaomicron (strain ATCC 29148 / DSM 2079 / JCM 5827 / CCUG 10774 / NCTC 10582 / VPI-5482 / E50), this protein is Small ribosomal subunit protein uS19.